Here is a 238-residue protein sequence, read N- to C-terminus: Ribitol-5-phosphate cytidylyltransferase (238 aa).

Residues 7 to 10 and 80 to 86 contribute to the CTP site; these read FAGG and GETGQES.

It belongs to the IspD/TarI cytidylyltransferase family. TarI subfamily.

The enzyme catalyses D-ribitol 5-phosphate + CTP + H(+) = CDP-L-ribitol + diphosphate. In terms of biological role, catalyzes the transfer of the cytidylyl group of CTP to D-ribitol 5-phosphate. This is Ribitol-5-phosphate cytidylyltransferase from Vibrio parahaemolyticus serotype O3:K6 (strain RIMD 2210633).